We begin with the raw amino-acid sequence, 282 residues long: Large ribosomal subunit protein uL2 (282 aa).

Disordered regions lie at residues Lys-31–Gly-55 and Leu-223–Arg-282. Composition is skewed to basic residues over residues Thr-34–Gly-55 and Val-270–Arg-282.

The protein belongs to the universal ribosomal protein uL2 family. Part of the 50S ribosomal subunit. Forms a bridge to the 30S subunit in the 70S ribosome.

One of the primary rRNA binding proteins. Required for association of the 30S and 50S subunits to form the 70S ribosome, for tRNA binding and peptide bond formation. It has been suggested to have peptidyltransferase activity; this is somewhat controversial. Makes several contacts with the 16S rRNA in the 70S ribosome. The chain is Large ribosomal subunit protein uL2 from Anaeromyxobacter dehalogenans (strain 2CP-C).